Consider the following 70-residue polypeptide: Alpha-toxin Bot9 (70 aa).

The 64-residue stretch at 6–69 (RDGYIVYPNN…PIKDPSYKCY (64 aa)) folds into the LCN-type CS-alpha/beta domain. Intrachain disulfides connect cysteine 16-cysteine 68, cysteine 20-cysteine 40, cysteine 26-cysteine 50, and cysteine 30-cysteine 52.

It belongs to the long (4 C-C) scorpion toxin superfamily. Sodium channel inhibitor family. Alpha subfamily. Expressed by the venom gland.

It localises to the secreted. Functionally, alpha toxins bind voltage-independently at site-3 of sodium channels (Nav) and inhibit the inactivation of the activated channels, thereby blocking neuronal transmission. This toxin is active against rat Nav1.2/SCN2A and B.germanica Nav1. In Buthus occitanus tunetanus (Common European scorpion), this protein is Alpha-toxin Bot9.